We begin with the raw amino-acid sequence, 688 residues long: Hid-1 family protein P19A11.07c (688 aa).

Belongs to the hid-1 family.

Its subcellular location is the cytoplasm. It is found in the nucleus. The protein is Hid-1 family protein P19A11.07c of Schizosaccharomyces pombe (strain 972 / ATCC 24843) (Fission yeast).